The primary structure comprises 171 residues: Ponticulin-like protein F (171 aa).

A signal peptide spans 1–20 (MKFIPALIIFVFTIFALTNS). The GPI-like-anchor amidated glycine moiety is linked to residue G149. A propeptide spans 150-171 (TSSTIVIPFALILSLLLSVITL) (removed in mature form).

This sequence belongs to the ponticulin family. Post-translationally, the GPI-like-anchor contains a phosphoceramide group, rather than a phosphatidyl group.

It is found in the cell membrane. The sequence is that of Ponticulin-like protein F (ponF) from Dictyostelium discoideum (Social amoeba).